The following is a 137-amino-acid chain: Bombinin-like peptides 2 (137 aa).

The signal sequence occupies residues 1–18 (MNFKYIVAVSILIASAYA). Asn-70 carries the asparagine amide modification. The segment at 92-112 (DSLEHPEEASEKETRGFNQEE) is disordered. Ile-136 is subject to Isoleucine amide.

It belongs to the bombinin family. Expressed by the skin glands.

Its subcellular location is the secreted. In terms of biological role, bombinin-like peptide 2 has antimicrobial activity, but no hemolytic activity. Preliminary evidence indicates that this peptide does not lyse and thus kill the bacteria by its antimicrobial activity. Bombinin H2 has antibacterial and hemolytic activity. This Bombina variegata (Yellow-bellied toad) protein is Bombinin-like peptides 2.